The sequence spans 479 residues: GTPase Obg (479 aa).

The region spanning 2–159 is the Obg domain; sequence PRFVDRVVIH…RDLTLELKTV (158 aa). The OBG-type G domain maps to 160-340; sequence ADVGLVGFPS…LIFGLWQMVS (181 aa). Residues 166-173, 191-195, 212-215, 292-295, and 321-323 contribute to the GTP site; these read GFPSAGKS, FTTLV, DVPG, NKID, and STV. Residues Ser173 and Thr193 each contribute to the Mg(2+) site. Residues 358–436 form the OCT domain; it reads PVPVDDSGFD…IGEMTFDWEP (79 aa). The segment at 438 to 479 is disordered; sequence TPAGGHVAMSGRGTDVRLERSDRVGAAERKAARRQRRERDDD. Residues 451–467 show a composition bias toward basic and acidic residues; sequence TDVRLERSDRVGAAERK.

Belongs to the TRAFAC class OBG-HflX-like GTPase superfamily. OBG GTPase family. As to quaternary structure, monomer. The cofactor is Mg(2+).

It localises to the cytoplasm. In terms of biological role, an essential GTPase which binds GTP, GDP and possibly (p)ppGpp with moderate affinity, with high nucleotide exchange rates and a fairly low GTP hydrolysis rate. Plays a role in control of the cell cycle, stress response, ribosome biogenesis and in those bacteria that undergo differentiation, in morphogenesis control. The protein is GTPase Obg of Mycobacterium ulcerans (strain Agy99).